Reading from the N-terminus, the 259-residue chain is MVLIRVLANLLILQLSYAQKSSELIFGGRPCNRNEHRFLALVYSDGNQCSGTLINEEWVLTAAHCEGNKMKIHLGVHSKKVPNKDKQTRVPKEKFFCVSSKTYTKWNKDIMLIRLDRPVSNSKHIAPLNLPSSSPSVGSVCRIMGWGTISPTEVILPDVPQCANINLLSYSVCRAAYPEYGLPATSRTLCAGILEGGKDTCAGDSGGPLICNGQFQGIASWGSTLCGYVREPALYTKVFDHLDWIQSIIAGNTDATCPL.

The first 18 residues, Met1–Ala18, serve as a signal peptide directing secretion. The propeptide occupies Gln19 to Leu24. The Peptidase S1 domain occupies Ile25–Ala250. 6 disulfides stabilise this stretch: Cys31/Cys162, Cys49/Cys65, Cys97/Cys257, Cys141/Cys211, Cys173/Cys190, and Cys201/Cys226. Residues His64 and Asp109 each act as charge relay system in the active site. Ser205 acts as the Charge relay system in catalysis.

The protein belongs to the peptidase S1 family. Snake venom subfamily. As to quaternary structure, monomer. Expressed by the venom gland.

The protein resides in the secreted. In terms of biological role, snake venom serine protease that may act in the hemostasis system of the prey. The polypeptide is Snake venom serine proteinase 2 (Crotalus adamanteus (Eastern diamondback rattlesnake)).